Consider the following 211-residue polypeptide: ATP phosphoribosyltransferase (211 aa).

The protein belongs to the ATP phosphoribosyltransferase family. Short subfamily. As to quaternary structure, heteromultimer composed of HisG and HisZ subunits.

The protein resides in the cytoplasm. The enzyme catalyses 1-(5-phospho-beta-D-ribosyl)-ATP + diphosphate = 5-phospho-alpha-D-ribose 1-diphosphate + ATP. It functions in the pathway amino-acid biosynthesis; L-histidine biosynthesis; L-histidine from 5-phospho-alpha-D-ribose 1-diphosphate: step 1/9. Catalyzes the condensation of ATP and 5-phosphoribose 1-diphosphate to form N'-(5'-phosphoribosyl)-ATP (PR-ATP). Has a crucial role in the pathway because the rate of histidine biosynthesis seems to be controlled primarily by regulation of HisG enzymatic activity. The chain is ATP phosphoribosyltransferase from Hahella chejuensis (strain KCTC 2396).